Consider the following 695-residue polypeptide: uncharacterized protein (695 aa).

This is an uncharacterized protein from Xanthomonas campestris pv. campestris (strain B100).